Here is a 361-residue protein sequence, read N- to C-terminus: Tyrosine--tRNA ligase (361 aa).

L-tyrosine-binding residues include Y36, Y162, Q166, D169, and Q184. Residues K236–S240 carry the 'KMSKS' region motif. K239 is a binding site for ATP.

Belongs to the class-I aminoacyl-tRNA synthetase family. TyrS type 4 subfamily. As to quaternary structure, homodimer.

The protein resides in the cytoplasm. It carries out the reaction tRNA(Tyr) + L-tyrosine + ATP = L-tyrosyl-tRNA(Tyr) + AMP + diphosphate + H(+). Catalyzes the attachment of tyrosine to tRNA(Tyr) in a two-step reaction: tyrosine is first activated by ATP to form Tyr-AMP and then transferred to the acceptor end of tRNA(Tyr). This is Tyrosine--tRNA ligase from Saccharolobus islandicus (strain Y.N.15.51 / Yellowstone #2) (Sulfolobus islandicus).